A 432-amino-acid polypeptide reads, in one-letter code: Adenylosuccinate synthetase (432 aa).

GTP-binding positions include 13-19 (GDEGKGK) and 41-43 (GHT). The active-site Proton acceptor is Asp14. Positions 14 and 41 each coordinate Mg(2+). Residues 14-17 (DEGK), 39-42 (NAGH), Thr130, Arg144, Gln225, Thr240, and Arg304 each bind IMP. His42 acts as the Proton donor in catalysis. Substrate is bound at residue 300–306 (ATTGRRR). GTP-binding positions include Arg306, 332 to 334 (KLD), and 415 to 417 (STG).

Belongs to the adenylosuccinate synthetase family. Homodimer. It depends on Mg(2+) as a cofactor.

The protein localises to the cytoplasm. It carries out the reaction IMP + L-aspartate + GTP = N(6)-(1,2-dicarboxyethyl)-AMP + GDP + phosphate + 2 H(+). Its pathway is purine metabolism; AMP biosynthesis via de novo pathway; AMP from IMP: step 1/2. Functionally, plays an important role in the de novo pathway of purine nucleotide biosynthesis. Catalyzes the first committed step in the biosynthesis of AMP from IMP. In Klebsiella pneumoniae subsp. pneumoniae (strain ATCC 700721 / MGH 78578), this protein is Adenylosuccinate synthetase.